A 230-amino-acid polypeptide reads, in one-letter code: Cutinase 1 (230 aa).

Positions 1–16 (MKFFALTTLLAATASA) are cleaved as a signal peptide. A propeptide spanning residues 17 to 31 (LPTSNPAQELEARQL) is cleaved from the precursor. Residue G32 is modified to N-D-glucuronoyl glycine. Residues C47 and C125 are joined by a disulfide bond. The Nucleophile role is filled by S136. A disulfide bridge connects residues C187 and C194. Residue D191 is part of the active site. The Proton donor/acceptor role is filled by H204.

This sequence belongs to the cutinase family. Post-translationally, the 2 disulfide bonds play a critical role in holding the catalytic residues in juxta-position; reduction of the disulfide bridges results in the complete inactivation of the enzyme. In terms of processing, O-glycosylated; contains one mole each of mannose, arabinose, N-acetylglucosamine, and glucuronic acid.

It is found in the secreted. The catalysed reaction is cutin + H2O = cutin monomers.. Inhibited by n-undecyl phosphonate (C11Y4). Inhibited by paraoxon. Its function is as follows. Catalyzes the hydrolysis of complex carboxylic polyesters found in the cell wall of plants. Degrades cutin, a macromolecule that forms the structure of the plant cuticle. Allows pathogenic fungi to penetrate through the cuticular barrier into the host plant during the initial stage of fungal infection. This Fusarium vanettenii (Neocosmospora pisi) protein is Cutinase 1 (CUT1).